The chain runs to 691 residues: Choline transporter-like 1 (691 aa).

The segment covering 1 to 10 (MGCAESKDGE) has biased composition (basic and acidic residues). A disordered region spans residues 1-20 (MGCAESKDGEGEAQNNRPKY). The next 3 membrane-spanning stretches (helical) occupy residues 28–48 (WLAIYIIFWLFLIVIAIFSFV), 205–225 (WHIIAMVCGLALLISIALVTM), and 232–252 (IVSWIICVLVIVASVALTVAL). N-linked (GlcNAc...) asparagine glycosylation occurs at N261. A run of 2 helical transmembrane segments spans residues 282–302 (VLTLAVLATITMIILIVVIYF) and 332–352 (LLAFLVLIAFLSFWVAVIICL). The N-linked (GlcNAc...) asparagine glycan is linked to N385. 4 helical membrane passes run 408 to 428 (SMFWIYVVGLIWTVEFIFACQ), 527 to 547 (VVAIESINFCPAAGIAWNAMA), 562 to 582 (FILFLGKVVVAALSGLIGIVL), and 591 to 611 (FYMAPVIIIIIFSFFIAHIIL).

It belongs to the CTL (choline transporter-like) family.

Its subcellular location is the membrane. The protein is Choline transporter-like 1 of Drosophila melanogaster (Fruit fly).